Consider the following 111-residue polypeptide: Cytochrome bo(3) ubiquinol oxidase subunit 4 (111 aa).

Residues 1-17 (MSSAAHDNHGAGHGSLG) are Cytoplasmic-facing. A helical membrane pass occupies residues 18-38 (SYAIGFVLSVILTAIPFYMVM). The Periplasmic portion of the chain corresponds to 39–46 (DGGFSRHA). A helical transmembrane segment spans residues 47-67 (TILTMVVLGLVQVVVHLICFL). The Cytoplasmic portion of the chain corresponds to 68–80 (HMNMSSEGRWNVM). A helical membrane pass occupies residues 81–101 (AFIFTVIVILLVVGLSLWIIF). The Periplasmic segment spans residues 102–111 (SADMLMMPMP).

The protein belongs to the cytochrome c oxidase bacterial subunit 4 family. Heterooctamer of two A chains, two B chains, two C chains and two D chains.

The protein resides in the cell inner membrane. Its function is as follows. Cytochrome bo(3) ubiquinol terminal oxidase is the component of the aerobic respiratory chain of E.coli that predominates when cells are grown at high aeration. Has proton pump activity across the membrane in addition to electron transfer, pumping 2 protons/electron. The polypeptide is Cytochrome bo(3) ubiquinol oxidase subunit 4 (cyoD) (Pseudomonas aeruginosa (strain ATCC 15692 / DSM 22644 / CIP 104116 / JCM 14847 / LMG 12228 / 1C / PRS 101 / PAO1)).